The primary structure comprises 797 residues: N-acetylneuraminate (7)9-O-acetyltransferase (797 aa).

Over M1 to S18 the chain is Cytoplasmic. The helical transmembrane segment at V19–A39 threads the bilayer. The Lumenal portion of the chain corresponds to S40 to Q313. The N-linked (GlcNAc...) asparagine glycan is linked to N46. Residue S94 is the Acyl-ester intermediate of the active site. N175 and N187 each carry an N-linked (GlcNAc...) asparagine glycan. Catalysis depends on residues D270 and H273. A helical membrane pass occupies residues K314–H334. Topologically, residues R335–S363 are cytoplasmic. A helical membrane pass occupies residues L364–C384. Residues D385–K395 are Lumenal-facing. A helical membrane pass occupies residues F396–Y416. At N417–Q439 the chain is on the cytoplasmic side. A helical membrane pass occupies residues L440–I460. A topological domain (lumenal) is located at residue R461. The helical transmembrane segment at V462–K482 threads the bilayer. The Cytoplasmic portion of the chain corresponds to G483–G486. A helical transmembrane segment spans residues I487–V507. The Lumenal segment spans residues M508–Q513. A helical membrane pass occupies residues F514 to L534. Residues W535–N546 lie on the Cytoplasmic side of the membrane. A helical membrane pass occupies residues F547–L567. The Lumenal segment spans residues A568–R599. A helical membrane pass occupies residues W600–L620. At Q621–K638 the chain is on the cytoplasmic side. A helical transmembrane segment spans residues I639–S659. At S660 to H671 the chain is on the lumenal side. A helical membrane pass occupies residues P672–A692. Over R693–S698 the chain is Cytoplasmic. Residues F699 to L719 form a helical membrane-spanning segment. Residues A720 to G725 are Lumenal-facing. A helical membrane pass occupies residues I726–V746. Over C747–S770 the chain is Cytoplasmic. The chain crosses the membrane as a helical span at residues L771–I791. At Q792–L797 the chain is on the lumenal side.

Belongs to the PC-esterase family. CASD1 subfamily. Post-translationally, N-glycosylated. Ubiquitously expressed.

The protein resides in the golgi apparatus membrane. It carries out the reaction CMP-N-acetyl-beta-neuraminate + acetyl-CoA = CMP-N-acetyl-9-O-acetyl-beta-neuraminate + CoA. The catalysed reaction is a ganglioside GD3 (d18:1(4E)) + acetyl-CoA = a ganglioside Ac-O-7-GD3(d18:1(4E)) + CoA. It catalyses the reaction CMP-N-acetyl-beta-neuraminate + acetyl-CoA = CMP-N-acetyl-7-O-acetyl-beta-neuraminate + CoA. Its function is as follows. Key enzyme in the biosynthesis of O-acetylated (O-Ac) sialoglycans such as gangliosides O-AcGD3 and O-AcGD2, which affect various processes such as cell-cell interactions, host-pathogen recognition. Catalyzes the transfer of an acetyl group from a donor, the acetyl-coenzyme-A molecule (acetyl-CoA), to the C7/8/9 OH-position of a sialic acid residue. The primary site of O-acetyl group transfer on sialic acid seems to depend on cell type and can be C7, from which the O-acetyl group could subsequently migrate to the C8 and then to the C9 position, or at C9 with possibility of migrating to the C8 and then to the C7 position. Together with ST8SIA1 (GD3 synthase) it increases the levels of ganglioside Ac-O-7-GD3. Can transfer the acetyl group from acetyl-CoA to free sialate (N-acetylneuraminate, Neu5Ac) in vitro, but has preferred substrate specificity for CMP-activated sialate (CMP-Neu5Ac), resulting in the formation of 9-O-acetylated CMP-Neu5Ac (CMP-Neu5,9Ac2). CMP-Neu5,9Ac2 may be used by sialyltransferases as a sialate donor for glycoconjugate acceptors such as ganglioside GD3. O-acetylation at position C9 of ganglioside GD3 can counteract the pro-apoptotic effects of the ganglioside GD3 in tumor cells. This Mus musculus (Mouse) protein is N-acetylneuraminate (7)9-O-acetyltransferase.